The sequence spans 876 residues: Leucine--tRNA ligase (876 aa).

The 'HIGH' region motif lies at 42–52 (PYPSGKLHMGH). Residues 634–638 (KMSKS) carry the 'KMSKS' region motif. Lys637 contacts ATP.

This sequence belongs to the class-I aminoacyl-tRNA synthetase family.

It localises to the cytoplasm. It catalyses the reaction tRNA(Leu) + L-leucine + ATP = L-leucyl-tRNA(Leu) + AMP + diphosphate. The chain is Leucine--tRNA ligase from Neisseria gonorrhoeae (strain ATCC 700825 / FA 1090).